A 309-amino-acid polypeptide reads, in one-letter code: MTLPFQITVPGSSANLGPGFDSVGLAVNRYLTLTVTEGSEWHFSTQSADLVGIPSGKENLVYQVAEHVASQLEKTLPPCHVQMESNIPLARGLGSSAAAIVAGIELANQLLGQPLAAEDKVRFGSLWEGHPDNIAPSVYGGLVIGTHLSTETHVIHGGVPDLDLVLLVPKEELLTKKARGILPESLSYKEAVRGSSVSNVLVAALLKENWELVGEMMVRDVFHHPYRLGLVPHLQEVIRYVKEETEAYGAALSGAGPTMLCLSPKGRGEWVQKQLQKQYPQFEVDVLKPDDQGIQVHRVLSNQQQLPIG.

88–98 provides a ligand contact to ATP; the sequence is PLARGLGSSAA.

This sequence belongs to the GHMP kinase family. Homoserine kinase subfamily.

It is found in the cytoplasm. It carries out the reaction L-homoserine + ATP = O-phospho-L-homoserine + ADP + H(+). Its pathway is amino-acid biosynthesis; L-threonine biosynthesis; L-threonine from L-aspartate: step 4/5. Its function is as follows. Catalyzes the ATP-dependent phosphorylation of L-homoserine to L-homoserine phosphate. The sequence is that of Homoserine kinase from Halalkalibacterium halodurans (strain ATCC BAA-125 / DSM 18197 / FERM 7344 / JCM 9153 / C-125) (Bacillus halodurans).